The following is a 346-amino-acid chain: Selenide, water dikinase (346 aa).

Residue Cys-15 is part of the active site. ATP-binding positions include Lys-18 and Ser-46–Asp-48. Asp-49 contacts Mg(2+). ATP-binding positions include Asp-66, Asp-89, and Gly-137 to Ser-139. A Mg(2+)-binding site is contributed by Asp-89. Residue Asp-225 participates in Mg(2+) binding.

The protein belongs to the selenophosphate synthase 1 family. Class I subfamily. Homodimer. The cofactor is Mg(2+).

The enzyme catalyses hydrogenselenide + ATP + H2O = selenophosphate + AMP + phosphate + 2 H(+). Functionally, synthesizes selenophosphate from selenide and ATP. This is Selenide, water dikinase from Photobacterium profundum (strain SS9).